A 209-amino-acid polypeptide reads, in one-letter code: FMN-dependent NADH:quinone oxidoreductase (209 aa).

Residues S10, S16–S18, and M98–F101 contribute to the FMN site.

The protein belongs to the azoreductase type 1 family. In terms of assembly, homodimer. FMN serves as cofactor.

It catalyses the reaction 2 a quinone + NADH + H(+) = 2 a 1,4-benzosemiquinone + NAD(+). It carries out the reaction N,N-dimethyl-1,4-phenylenediamine + anthranilate + 2 NAD(+) = 2-(4-dimethylaminophenyl)diazenylbenzoate + 2 NADH + 2 H(+). Its function is as follows. Quinone reductase that provides resistance to thiol-specific stress caused by electrophilic quinones. In terms of biological role, also exhibits azoreductase activity. Catalyzes the reductive cleavage of the azo bond in aromatic azo compounds to the corresponding amines. In Nitratidesulfovibrio vulgaris (strain ATCC 29579 / DSM 644 / CCUG 34227 / NCIMB 8303 / VKM B-1760 / Hildenborough) (Desulfovibrio vulgaris), this protein is FMN-dependent NADH:quinone oxidoreductase.